Consider the following 47-residue polypeptide: Laccase-2d (47 aa).

The Plastocyanin-like domain maps to 2–47; the sequence is TGPVADLHIINKDLSPDGFQRPTVVAGGGRDVVSIGRAGDNVTIRF.

The protein belongs to the multicopper oxidase family. Homodimer. The cofactor is Cu cation. Post-translationally, N-glycosylated; contains 17% carbohydrates.

The protein resides in the secreted. It catalyses the reaction 4 hydroquinone + O2 = 4 benzosemiquinone + 2 H2O. Inhibited by sodium azide, SDS and mercaptoethanol, but not by 4-hexyl resocinol, L-cysteine and dithiothreitol. Activity is inhibited by the heavy metal ions Cr, W, Sn, Ag(+) and Hg(2+), but not by Pb(2+), Fe(3+), Ni(2+), Li(2+), Co(2+) or Cd(2+). Its function is as follows. Lignin degradation and detoxification of lignin-derived products. Has highest activity towards ABTS, also active towards ferulic acid and guaiacol, but is not active towards tyrosine, vanillic acid, 2,5-dimethyl aniline, p-anisidine or violuric acid. The polypeptide is Laccase-2d (Cerrena unicolor (Canker rot fungus)).